The chain runs to 487 residues: 2-aminomuconic semialdehyde dehydrogenase (487 aa).

Residue 209-215 (GTGPRVG) coordinates NAD(+). The active-site Proton acceptor is the Glu-253. The Nucleophile role is filled by Cys-287. A Phosphoserine modification is found at Ser-362.

It belongs to the aldehyde dehydrogenase family. In terms of tissue distribution, highly expressed in adult kidney and liver. Detected at lower levels in fetal liver and kidney.

It localises to the cytoplasm. The enzyme catalyses 2-aminomuconate 6-semialdehyde + NAD(+) + H2O = (2Z,4E)-2-aminomuconate + NADH + 2 H(+). It functions in the pathway amino-acid degradation; L-kynurenine degradation. Its function is as follows. Catalyzes the NAD-dependent oxidation of 2-aminomuconic semialdehyde of the kynurenine metabolic pathway in L-tryptophan degradation. This is 2-aminomuconic semialdehyde dehydrogenase from Homo sapiens (Human).